A 601-amino-acid polypeptide reads, in one-letter code: Glutamine--tRNA ligase (601 aa).

The 'HIGH' region signature appears at 76–86 (PEPNGYLHIGH). Residues 77–79 (EPN) and 83–89 (HIGHAKS) each bind ATP. Residues Asp-109 and Tyr-253 each coordinate L-glutamine. ATP-binding positions include Thr-272, 301–302 (RL), and 309–311 (MSK). The 'KMSKS' region signature appears at 308-312 (VMSKR).

It belongs to the class-I aminoacyl-tRNA synthetase family. In terms of assembly, monomer.

Its subcellular location is the cytoplasm. The catalysed reaction is tRNA(Gln) + L-glutamine + ATP = L-glutaminyl-tRNA(Gln) + AMP + diphosphate. The protein is Glutamine--tRNA ligase of Rhodopirellula baltica (strain DSM 10527 / NCIMB 13988 / SH1).